We begin with the raw amino-acid sequence, 443 residues long: Serine/threonine-protein phosphatase 2A 55 kDa regulatory subunit B beta isoform (443 aa).

7 WD repeats span residues 22 to 61, 87 to 128, 171 to 209, 220 to 260, 279 to 317, 334 to 375, and 410 to 443; these read TEADIISTVEFNSTGELLATGDKGGRVVIFQREQENKNQP, EIEE…KRPE, AHTYHINSISVNSDYETYMSADDLRINLWNLEITNRSFN, ELTE…LCDR, EIISSISDVKFNHSGRYIMTRDYLTVKVWDLNMENRPIE, ENDC…DVTL, and DFSKKILHTAWHPSENIIAVAATNNLYIFQDKVN.

It belongs to the phosphatase 2A regulatory subunit B family. As to quaternary structure, PP2A consists of a common heterodimeric core enzyme, composed of a 36 kDa catalytic subunit (subunit C) and a 65 kDa constant regulatory subunit (PR65 or subunit A), that associates with a variety of regulatory subunits.

The protein resides in the cytoplasm. Its subcellular location is the cytoskeleton. It localises to the membrane. Its function is as follows. The B regulatory subunit might modulate substrate selectivity and catalytic activity, and might also direct the localization of the catalytic enzyme to a particular subcellular compartment. Negatively controls the initiation of oocyte maturation. The protein is Serine/threonine-protein phosphatase 2A 55 kDa regulatory subunit B beta isoform (ppp2r2b) of Xenopus tropicalis (Western clawed frog).